The primary structure comprises 512 residues: D-alanine--D-alanyl carrier protein ligase (512 aa).

An ATP-binding site is contributed by T152–S153. D199 lines the D-alanine pocket. N294–T299 is a binding site for ATP. Residue V303 participates in D-alanine binding. Residues D385, Y397–R400, and K499 contribute to the ATP site. K499 contacts D-alanine.

The protein belongs to the ATP-dependent AMP-binding enzyme family. DltA subfamily.

It localises to the cytoplasm. It catalyses the reaction holo-[D-alanyl-carrier protein] + D-alanine + ATP = D-alanyl-[D-alanyl-carrier protein] + AMP + diphosphate. It participates in cell wall biogenesis; lipoteichoic acid biosynthesis. In terms of biological role, catalyzes the first step in the D-alanylation of lipoteichoic acid (LTA), the activation of D-alanine and its transfer onto the D-alanyl carrier protein (Dcp) DltC. In an ATP-dependent two-step reaction, forms a high energy D-alanyl-AMP intermediate, followed by transfer of the D-alanyl residue as a thiol ester to the phosphopantheinyl prosthetic group of the Dcp. D-alanylation of LTA plays an important role in modulating the properties of the cell wall in Gram-positive bacteria, influencing the net charge of the cell wall. The chain is D-alanine--D-alanyl carrier protein ligase from Streptococcus pyogenes serotype M1.